The sequence spans 201 residues: Holliday junction branch migration complex subunit RuvA (201 aa).

The tract at residues 1–64 (MIGFIRGLLV…EDAHSLFGFG (64 aa)) is domain I. A domain II region spans residues 65 to 143 (TEAERGLFRS…IGVPSLAPAS (79 aa)). The flexible linker stretch occupies residues 144–153 (FAGGAAPLPA). Positions 153–201 (AADPADEAVSALIALGFKPQEANTLVARQAAEGRSAEDLIRAALQSAVR) are domain III.

It belongs to the RuvA family. In terms of assembly, homotetramer. Forms an RuvA(8)-RuvB(12)-Holliday junction (HJ) complex. HJ DNA is sandwiched between 2 RuvA tetramers; dsDNA enters through RuvA and exits via RuvB. An RuvB hexamer assembles on each DNA strand where it exits the tetramer. Each RuvB hexamer is contacted by two RuvA subunits (via domain III) on 2 adjacent RuvB subunits; this complex drives branch migration. In the full resolvosome a probable DNA-RuvA(4)-RuvB(12)-RuvC(2) complex forms which resolves the HJ.

Its subcellular location is the cytoplasm. In terms of biological role, the RuvA-RuvB-RuvC complex processes Holliday junction (HJ) DNA during genetic recombination and DNA repair, while the RuvA-RuvB complex plays an important role in the rescue of blocked DNA replication forks via replication fork reversal (RFR). RuvA specifically binds to HJ cruciform DNA, conferring on it an open structure. The RuvB hexamer acts as an ATP-dependent pump, pulling dsDNA into and through the RuvAB complex. HJ branch migration allows RuvC to scan DNA until it finds its consensus sequence, where it cleaves and resolves the cruciform DNA. The polypeptide is Holliday junction branch migration complex subunit RuvA (Methylococcus capsulatus (strain ATCC 33009 / NCIMB 11132 / Bath)).